The primary structure comprises 351 residues: Alternative oxidase, mitochondrial (351 aa).

The chain crosses the membrane as a helical span at residues 147–167 (LTRFIFLESVAGVPGMVGGML). Fe cation is bound by residues Glu154, Glu193, and His196. The helical transmembrane segment at 212-232 (LMVLGAQGVFFNGFFLSYLMS) threads the bilayer. Fe cation is bound by residues Glu244, Glu245, Glu299, and His302. Residues 322 to 351 (AAKYKDPTKAHPNKGIADLKPTGWEREEVI) form a disordered region.

Belongs to the alternative oxidase family. Fe cation is required as a cofactor.

The protein resides in the mitochondrion inner membrane. Functionally, catalyzes cyanide-resistant oxygen consumption. May increase respiration when the cytochrome respiratory pathway is restricted, or in response to low temperatures. The chain is Alternative oxidase, mitochondrial (aox1) from Aspergillus niger.